The following is a 424-amino-acid chain: Serine--tRNA ligase (424 aa).

Residue 232-234 (TAE) coordinates L-serine. Residue 263–265 (RQE) coordinates ATP. An L-serine-binding site is contributed by glutamate 286. 350–353 (EIGS) serves as a coordination point for ATP. Serine 386 contributes to the L-serine binding site.

Belongs to the class-II aminoacyl-tRNA synthetase family. Type-1 seryl-tRNA synthetase subfamily. Homodimer. The tRNA molecule binds across the dimer.

The protein resides in the cytoplasm. It catalyses the reaction tRNA(Ser) + L-serine + ATP = L-seryl-tRNA(Ser) + AMP + diphosphate + H(+). It carries out the reaction tRNA(Sec) + L-serine + ATP = L-seryl-tRNA(Sec) + AMP + diphosphate + H(+). It participates in aminoacyl-tRNA biosynthesis; selenocysteinyl-tRNA(Sec) biosynthesis; L-seryl-tRNA(Sec) from L-serine and tRNA(Sec): step 1/1. Functionally, catalyzes the attachment of serine to tRNA(Ser). Is also able to aminoacylate tRNA(Sec) with serine, to form the misacylated tRNA L-seryl-tRNA(Sec), which will be further converted into selenocysteinyl-tRNA(Sec). The protein is Serine--tRNA ligase of Aster yellows witches'-broom phytoplasma (strain AYWB).